Reading from the N-terminus, the 115-residue chain is Hydrogenase maturation factor HypA (115 aa).

H2 contacts Ni(2+). The Zn(2+) site is built by C73, C76, C89, and C92.

The protein belongs to the HypA/HybF family.

In terms of biological role, involved in the maturation of [NiFe] hydrogenases. Required for nickel insertion into the metal center of the hydrogenase. This chain is Hydrogenase maturation factor HypA, found in Shewanella halifaxensis (strain HAW-EB4).